A 296-amino-acid polypeptide reads, in one-letter code: Ribosomal RNA small subunit methyltransferase H (296 aa).

S-adenosyl-L-methionine is bound by residues 38-40 (GAH), E57, F88, D103, and H110.

This sequence belongs to the methyltransferase superfamily. RsmH family.

It localises to the cytoplasm. The enzyme catalyses cytidine(1402) in 16S rRNA + S-adenosyl-L-methionine = N(4)-methylcytidine(1402) in 16S rRNA + S-adenosyl-L-homocysteine + H(+). Specifically methylates the N4 position of cytidine in position 1402 (C1402) of 16S rRNA. This Borreliella afzelii (strain PKo) (Borrelia afzelii) protein is Ribosomal RNA small subunit methyltransferase H.